An 833-amino-acid chain; its full sequence is Kinesin-like protein KIFC3 (833 aa).

The tract at residues 19-74 (LWRVGRAPEPEPGMARPAPAPASPAARPFPHTGPGRLRTGRGKDTPVCGDEDSSAR) is disordered. The span at 30–48 (PGMARPAPAPASPAARPFP) shows a compositional bias: low complexity. Coiled coils occupy residues 102–362 (LTLQ…ENLA) and 395–432 (LLQE…LQLR). The Kinesin motor domain occupies 445–768 (NIRVIARVRP…LKFAERVRSV (324 aa)). ATP is bound at residue 528-535 (GQTGAGKT). Residues 786–833 (EHLEWEPACQTPQPSARAHSAPSSGTSSRPGSIRRKLQPSGKSRPLPV) are disordered. Residues 806 to 815 (APSSGTSSRP) show a composition bias toward polar residues. Residues Ser813 and Ser817 each carry the phosphoserine modification.

It belongs to the TRAFAC class myosin-kinesin ATPase superfamily. Kinesin family.

The protein resides in the cell junction. Its subcellular location is the adherens junction. It is found in the cytoplasm. The protein localises to the cytoskeleton. It localises to the microtubule organizing center. The protein resides in the centrosome. Its subcellular location is the cytoplasmic vesicle membrane. Its function is as follows. Minus-end microtubule-dependent motor protein. Involved in apically targeted transport. Required for zonula adherens maintenance. In Homo sapiens (Human), this protein is Kinesin-like protein KIFC3 (KIFC3).